A 518-amino-acid polypeptide reads, in one-letter code: Kelch repeat and BTB domain-containing protein 4 (518 aa).

Residues 45 to 112 (ADVTISVEGR…IYHGTVKLRA (68 aa)) form the BTB domain. One can recognise a BACK domain in the interval 147-239 (CLQVMWLADR…SLKEIGENVH (93 aa)). Kelch repeat units lie at residues 239–285 (HIYL…KHGG), 286–328 (DLYV…SVPG), 331–378 (AIYS…NLNG), 380–430 (IYLL…VHKD), and 432–481 (VFIV…VFRD).

Component of the BCR(KBTBD4) E3 ubiquitin ligase complex, at least composed of CUL3, KBTBD4 and RBX1.

Its function is as follows. Substrate-specific adapter of a BCR (BTB-CUL3-RBX1) E3 ubiquitin ligase complex which targets CoREST corepressor complex components RCOR1, KDM1A/LSD1 and HDAC2 for proteasomal degradation. RCOR1 is likely to be the primary target while degradation of KDM1A and HDAC2 is likely due to their association with RCOR1. Also targets RCOR3, MIER2 and MIER3 for proteasomal degradation as well as associated proteins ZNF217 and RREB1. Degradation is dependent on the presence of an ELM2 domain in the target proteins. This Pongo abelii (Sumatran orangutan) protein is Kelch repeat and BTB domain-containing protein 4 (KBTBD4).